A 370-amino-acid polypeptide reads, in one-letter code: Ubiquitin carboxyl-terminal hydrolase 12 (370 aa).

The Required for plasma membrane localization of USP12/WDR20 motif lies at 1–4; it reads MEIL. The USP domain maps to 39-369; sequence FGLVNFGNTC…SGYILFYQSR (331 aa). The active-site Nucleophile is the Cys48. A compositionally biased stretch (basic and acidic residues) spans 146-157; the sequence is QEKQNGRLRNGD. The interval 146–168 is disordered; it reads QEKQNGRLRNGDVDSEDNNSTPD. Zn(2+)-binding residues include Cys186, Cys189, Cys233, and Cys236. The active-site Proton acceptor is His317.

The protein belongs to the peptidase C19 family. USP12/USP46 subfamily. In terms of assembly, interacts with WDR48. Interacts with WDR20; this interaction promotes translocation of the USP12 complex to the plasma membrane. Component of the USP12-WDR20-WDR48 deubiquitinating complex. Component of the USP12-DMWD-WDR48 deubiquitinating complex. Interacts with PHLPP1. Interacts with RBPJ. Interacts with CBP; this interaction blocks the acetyltransferase activity of CREBBP. Interacts with ITCH; the interaction is more efficient when both USP12 and WDR48/UAF1 are involved and may mediate recruitment of the USP12 deubiquitinating complex to Notch.

It is found in the nucleus. Its subcellular location is the cytoplasm. The protein localises to the cell membrane. It carries out the reaction Thiol-dependent hydrolysis of ester, thioester, amide, peptide and isopeptide bonds formed by the C-terminal Gly of ubiquitin (a 76-residue protein attached to proteins as an intracellular targeting signal).. Activated by interaction with WDR20, WDR48 and DMWD through different allosteric mechanisms. Its function is as follows. Deubiquitinating enzyme that plays various roles in the regulation of the immune response and inflammation. During TCR engagement and activation, translocates into the cytoplasm and deubiquitinates its substrates LAT and TRAT1 and prevents their lysosome-dependent degradation to stabilize the TCR signaling complex at the plasma membrane. Plays an essential role in the selective LPS-induced macrophage response through the activation of NF-kappa-B pathway. In addition, promotes that antiviral immune response through targeting DNA sensor IFI16 to inhibit its proteasome-dependent degradation. Participates in the interferon signaling pathway and antiviral response independently of its deubiquitinase activity by maintaining nuclear phosphorylated STAT1 levels via inhibition of its CREBBP-mediated acetylation and subsequent dephosphorylation. Plays an intrinsic role in promoting the differentiation, activation and proliferation of CD4(+) T-cell by activating the NF-kappa-B signaling pathway through deubiquitinating and stabilizing B-cell lymphoma/leukemia 10/BCL10. In myeloid-derived suppressor cells promotes the activation of the NF-kappa-B via deubiquitination and stabilization of RELA. Regulates the 'Lys-63'-linked polyubiquitin chains of BAX and thereby modulates the mitochondrial apoptotic process. Negative regulator of NOTCH signaling that specifically deubiquitinates non-activated NOTCH receptors to target them for lysosomal degradation; deubiquitination of NOTCH stimulates its transport form late endosomes to lysosomes. Protects neurons against HTT/huntingtin-induced polyglutamine expansion-dependent neurodegeneration through regulation of autophagic flux. This function is independent of deubiquitinase activity or of other components of the USP12-WDR20-WDR48 deubiquitinating complex. In complex with WDR48, acts as a potential tumor suppressor by positively regulating PHLPP1 stability. The polypeptide is Ubiquitin carboxyl-terminal hydrolase 12 (Rattus norvegicus (Rat)).